The following is a 234-amino-acid chain: MEFSPPLQRATLIQRYKRFLADVITPDGRELTLHCPNTGAMTGCATPGDTVWYSTSDNTKRKYPHTWELTQSQSGAFICVNTLWANRLTKEAILNESISELSGYSSLKSEVKYGAERSRIDFMLQADSRPDCYIEVKSVTLAENEQGYFPDAVTERGQKHLRELMSVAAEGQRAVIFFAVLHSAITRFSPARHIDEKYAQLLSEAQQRGVEILAYKAELSAEGMALKKSLPVTL.

Residues Leu201–Ser220 constitute a DNA-binding region (H-T-H motif).

Belongs to the SfsA family.

In terms of biological role, binds to DNA non-specifically. Could be a regulatory factor involved in maltose metabolism. In Escherichia coli (strain SMS-3-5 / SECEC), this protein is Sugar fermentation stimulation protein A.